A 143-amino-acid polypeptide reads, in one-letter code: Snake venom vascular endothelial growth factor toxin (143 aa).

A signal peptide spans 1-24 (MAAYLLAVAILFCIQGWPSATVQG). Gln-25 carries the pyrrolidone carboxylic acid modification. 3 disulfides stabilise this stretch: Cys-38-Cys-80, Cys-69-Cys-115, and Cys-73-Cys-117. Residues 115-143 (CECRPRSPGDVNNGRNPEEGEPRARFPFV) are disordered. Residues 130 to 143 (NPEEGEPRARFPFV) show a composition bias toward basic and acidic residues.

This sequence belongs to the PDGF/VEGF growth factor family. Snake venom VEGF subfamily. In terms of assembly, homodimer; disulfide-linked. Interacts with VEGF receptor-2 (KDR). The N-terminus is blocked for N-terminal sequencing, suggesting a Pyrrolidone carboxylic acid at Gln-25. As to expression, expressed by the venom gland.

It is found in the secreted. Its function is as follows. Snake venom VEGFs that may contribute to venom dispersion and prey subjugation by inducing vascular permeability and hypotension. This protein induces an increase in capillary permeability when intradermally injected into mice. Also provokes a drastic hypotensive effect after intravenous injection. The hypotension is mediated by nitric oxide (NO), which is produced by VEGF-activated endothelium NO synthase. Also induces angiogenesis in vitro. Unlike other crotalid VEGFs, this protein interacts with VEGF receptor-2 (KDR) with a high affinity (Kd=413 pM), whereas no interaction is detected with VEGF receptor-1 (FLT1). The protein is Snake venom vascular endothelial growth factor toxin of Protobothrops jerdonii (Jerdon's pitviper).